The primary structure comprises 430 residues: Protein POLLENLESS 3-LIKE 2 (430 aa).

The segment at 1–21 (MMRDVFRPTKSAPCSPAKPLG) is disordered. TPR repeat units follow at residues 40–73 (DSPYVRAKNVQLVEKDPERAIPLFWKAINAGDRV), 74–107 (DSALKDMAIVMKQQNRAEEAIEAIKSLRVRCSDQ), 110–143 (ESLDNILLDLYKRCGRLDDQIGLLKHKLFLIQKG), 170–203 (TRLLGNLGWALMQRDNFVEAEDAYRRALSIAPDN), 205–236 (KMCNLGICLMKQGRIDEAKETLRRVKPAVVDG), and 238–257 (RGVDSHLKAYERAQQMLNDL). Positions 81 to 107 (AIVMKQQNRAEEAIEAIKSLRVRCSDQ) form a coiled coil. The disordered stretch occupies residues 346–376 (KLKRTRSSSQGMGMLSGIGGDHEGETNTSTR).

Belongs to the MS5 protein family.

Its subcellular location is the nucleus. Its function is as follows. Probably involved in the regulation of cell division. The polypeptide is Protein POLLENLESS 3-LIKE 2 (Arabidopsis thaliana (Mouse-ear cress)).